We begin with the raw amino-acid sequence, 384 residues long: Autophagy-related protein 30 (384 aa).

Residues 1–63 are disordered; sequence MFSRKQVQKR…ASPGQLRPRT (63 aa). Residues 13 to 27 show a composition bias toward low complexity; the sequence is ELSSLHCSNSSNSLN. The span at 45–63 shows a compositional bias: polar residues; it reads RGNNRSDNVASPGQLRPRT. Ser112 is modified (phosphoserine). The disordered stretch occupies residues 266–291; the sequence is VKHDKPSSPLPNYHNTLKQAPSSNSQ. A compositionally biased stretch (polar residues) spans 278–291; it reads YHNTLKQAPSSNSQ.

Interacts with ATG11, ATG17, ATG37, PEX3 and PEX14. Phosphorylation at Ser-112 is required for micro- and macropexophagy.

It localises to the vacuole lumen. Its subcellular location is the preautophagosomal structure. The protein resides in the peroxisome membrane. Functionally, acts as the peroxisome receptor for pexophagy. Required for both micropexophagy and macropexophagy, but not for the cytoplasm to vacuole transport (Cvt) or autophagy pathways. Required for functional micropexophagic apparatus (MIPA) and relocation of ATG11 to the peroxisome-sequestering arms of the vacuole. The sequence is that of Autophagy-related protein 30 (ATG30) from Komagataella phaffii (strain GS115 / ATCC 20864) (Yeast).